The sequence spans 298 residues: MIKVRVPATSANMGPGFDSMGMAVKVYNEFAFREINNGLNFNGVPEEFCNEDNIIYKAMKYCFDKADYKIKGLNISVLNQDIPISRGLGSSSSCIVGGLVGANEILGGKFSKDELLEMAVKIEGHPDNVAPALFGGMVVAIIENNKTVYNKIEIKDKVKFITIVPDFRLSTEKARTVLPKQISRADGIYNIGRAALMISCFVTDRYDLIRSACNDALHQNYRKELIPHFDDVYNKCYELGALGCYLSGAGPTIMAIIDNGANGFSNNIKQYLKDKDIKWGVLELQADNKGAFVIKGDS.

83–93 provides a ligand contact to ATP; that stretch reads PISRGLGSSSS.

Belongs to the GHMP kinase family. Homoserine kinase subfamily.

Its subcellular location is the cytoplasm. The catalysed reaction is L-homoserine + ATP = O-phospho-L-homoserine + ADP + H(+). It participates in amino-acid biosynthesis; L-threonine biosynthesis; L-threonine from L-aspartate: step 4/5. In terms of biological role, catalyzes the ATP-dependent phosphorylation of L-homoserine to L-homoserine phosphate. This Clostridium botulinum (strain Eklund 17B / Type B) protein is Homoserine kinase.